A 152-amino-acid chain; its full sequence is Transcriptional repressor NrdR (152 aa).

Residues 3–34 fold into a zinc finger; the sequence is CPFCNHGELKVIDSRNSPEANAIKRRRECLRC. Residues 48–138 form the ATP-cone domain; the sequence is IQVLKRDGRY…VYRRFRDVGE (91 aa).

This sequence belongs to the NrdR family. Zn(2+) is required as a cofactor.

Functionally, negatively regulates transcription of bacterial ribonucleotide reductase nrd genes and operons by binding to NrdR-boxes. This chain is Transcriptional repressor NrdR, found in Chlamydia muridarum (strain MoPn / Nigg).